Reading from the N-terminus, the 337-residue chain is Mycothiol acetyltransferase (337 aa).

N-acetyltransferase domains are found at residues 11-151 and 154-337; these read LDER…FELP and VRLR…MYRK. Glu-37 contacts 1D-myo-inositol 2-(L-cysteinylamino)-2-deoxy-alpha-D-glucopyranoside. 81–83 contributes to the acetyl-CoA binding site; sequence LVI. Position 182 (Glu-182) interacts with 1D-myo-inositol 2-(L-cysteinylamino)-2-deoxy-alpha-D-glucopyranoside. The segment at 210–246 is disordered; that stretch reads RPTGSGDGDVADGGSTDGGPADSGSADGGAGEGGTGD. Residues 221-234 are compositionally biased toward low complexity; that stretch reads DGGSTDGGPADSGS. Over residues 235 to 246 the composition is skewed to gly residues; it reads ADGGAGEGGTGD. Lys-257 and Glu-271 together coordinate 1D-myo-inositol 2-(L-cysteinylamino)-2-deoxy-alpha-D-glucopyranoside. Acetyl-CoA contacts are provided by residues 275–277 and 282–288; these read VGV and QGGGLGR. Tyr-309 is a 1D-myo-inositol 2-(L-cysteinylamino)-2-deoxy-alpha-D-glucopyranoside binding site. Residue 314–319 coordinates acetyl-CoA; the sequence is NTAAIR.

The protein belongs to the acetyltransferase family. MshD subfamily. Monomer.

It catalyses the reaction 1D-myo-inositol 2-(L-cysteinylamino)-2-deoxy-alpha-D-glucopyranoside + acetyl-CoA = mycothiol + CoA + H(+). Its function is as follows. Catalyzes the transfer of acetyl from acetyl-CoA to desacetylmycothiol (Cys-GlcN-Ins) to form mycothiol. This is Mycothiol acetyltransferase from Streptosporangium roseum (strain ATCC 12428 / DSM 43021 / JCM 3005 / KCTC 9067 / NCIMB 10171 / NRRL 2505 / NI 9100).